A 368-amino-acid chain; its full sequence is Molybdenum import ATP-binding protein ModC (368 aa).

An ABC transporter domain is found at 1-231 (MKGLQVAFKQ…QAMRPWQSFS (231 aa)). Residue 33-40 (GRSGAGKT) participates in ATP binding. The Mop domain maps to 292–363 (KTSIRNIIEA…IKGVSVTQRD (72 aa)).

This sequence belongs to the ABC transporter superfamily. Molybdate importer (TC 3.A.1.8) family. In terms of assembly, the complex is composed of two ATP-binding proteins (ModC), two transmembrane proteins (ModB) and a solute-binding protein (ModA).

The protein localises to the cell inner membrane. It carries out the reaction molybdate(out) + ATP + H2O = molybdate(in) + ADP + phosphate + H(+). Functionally, part of the ABC transporter complex ModABC involved in molybdenum import. Responsible for energy coupling to the transport system. This Vibrio vulnificus (strain YJ016) protein is Molybdenum import ATP-binding protein ModC.